The sequence spans 280 residues: Putative pyruvate, phosphate dikinase regulatory protein (280 aa).

154 to 161 contributes to the ADP binding site; the sequence is GVSRTSKT.

The protein belongs to the pyruvate, phosphate/water dikinase regulatory protein family. PDRP subfamily.

The enzyme catalyses N(tele)-phospho-L-histidyl/L-threonyl-[pyruvate, phosphate dikinase] + ADP = N(tele)-phospho-L-histidyl/O-phospho-L-threonyl-[pyruvate, phosphate dikinase] + AMP + H(+). It carries out the reaction N(tele)-phospho-L-histidyl/O-phospho-L-threonyl-[pyruvate, phosphate dikinase] + phosphate + H(+) = N(tele)-phospho-L-histidyl/L-threonyl-[pyruvate, phosphate dikinase] + diphosphate. In terms of biological role, bifunctional serine/threonine kinase and phosphorylase involved in the regulation of the pyruvate, phosphate dikinase (PPDK) by catalyzing its phosphorylation/dephosphorylation. The polypeptide is Putative pyruvate, phosphate dikinase regulatory protein (Nitrobacter hamburgensis (strain DSM 10229 / NCIMB 13809 / X14)).